A 350-amino-acid chain; its full sequence is Selenide, water dikinase (350 aa).

The active site involves U15. A non-standard amino acid (selenocysteine) is located at residue U15. ATP contacts are provided by residues K18 and 47–49 (HNE). Position 50 (D50) interacts with Mg(2+). Residues D67, D90, and 138–140 (GHS) contribute to the ATP site. D90 contacts Mg(2+). D227 provides a ligand contact to Mg(2+).

This sequence belongs to the selenophosphate synthase 1 family. Class I subfamily. In terms of assembly, homodimer. Mg(2+) serves as cofactor.

The enzyme catalyses hydrogenselenide + ATP + H2O = selenophosphate + AMP + phosphate + 2 H(+). In terms of biological role, synthesizes selenophosphate from selenide and ATP. In Nitratidesulfovibrio vulgaris (strain DSM 19637 / Miyazaki F) (Desulfovibrio vulgaris), this protein is Selenide, water dikinase.